The primary structure comprises 324 residues: MENYNVKTRAFPTIGIILLGGISDKKNRIPLHTTAGIAYTGINNDVYTETKLYVSKDEKCYIDGKEIDLNSDRSPSKVIDKFKHEILMRVNLDDENNLSIDSRNFNILSGSSDSGAAALGECIESIFEYNINIFTFENDLQRISESVGRSLYGGLTVNYANGRESLTEPLLEPEAFNNFTIIGAHFNIDRKPSNEIHENIIKHENYRERIKSAERKAKKLEELSRNANIKGIFELAESDTVEYHKMLHDVGVDIINDRMENLIERVKEMKNNFWNSYIVTGGPNVFVITEKKDVDKAMEGLNDLCDDIRLLKVAGKPQVISKNF.

Leucine 19 is a substrate binding site. ATP is bound at residue 109–112 (SGSS). Substrate-binding residues include glutamate 145 and arginine 149. Positions 190 and 193 each coordinate ATP.

This sequence belongs to the GHMP kinase family. As to quaternary structure, homodimer.

The enzyme catalyses (R)-mevalonate + ATP = (R)-3-phosphomevalonate + ADP + H(+). Its pathway is isoprenoid biosynthesis; isopentenyl diphosphate biosynthesis via mevalonate pathway. In terms of biological role, catalyzes the phosphorylation of mevalonate (MVA) to yield mevalonate-3-phosphate. Functions in an alternative mevalonate pathway, which passes through mevalonate 3-phosphate rather than mevalonate 5-phosphate. Also able to catalyze the formation of isobutene via the conversion of 3-hydroxyisovalerate (3-HIV) to an unstable 3-phosphate intermediate that undergoes a spontaneous decarboxylation. The sequence is that of Mevalonate-3-kinase from Picrophilus torridus (strain ATCC 700027 / DSM 9790 / JCM 10055 / NBRC 100828 / KAW 2/3).